Consider the following 299-residue polypeptide: Protease HtpX homolog (299 aa).

2 consecutive transmembrane segments (helical) span residues 14–34 (WLLLLVFFLLLGLVGYGVGYL) and 39–59 (GFGGLILALVIGFIYAVTMIF). Zn(2+) is bound at residue histidine 143. Residue glutamate 144 is part of the active site. Histidine 147 serves as a coordination point for Zn(2+). 2 helical membrane-spanning segments follow: residues 153–173 (IRISTIAVALASAITMLAVMA) and 198–218 (IILLIISLIAIILAPLAATLV). Residue glutamate 227 coordinates Zn(2+).

The protein belongs to the peptidase M48B family. It depends on Zn(2+) as a cofactor.

Its subcellular location is the cell membrane. This is Protease HtpX homolog from Streptococcus thermophilus (strain ATCC BAA-491 / LMD-9).